The primary structure comprises 83 residues: Short neurotoxin 1 (83 aa).

The first 21 residues, 1–21 (MKTLLLTLVVVTIVCLDLGYT), serve as a signal peptide directing secretion. 4 disulfide bridges follow: cysteine 24–cysteine 45, cysteine 38–cysteine 62, cysteine 64–cysteine 75, and cysteine 76–cysteine 81.

The protein belongs to the three-finger toxin family. Short-chain subfamily. Type I alpha-neurotoxin sub-subfamily. Expressed by the venom gland.

It localises to the secreted. Binds to muscle nicotinic acetylcholine receptor (nAChR) and inhibit acetylcholine from binding to the receptor, thereby impairing neuromuscular transmission. In Pseudechis australis (Mulga snake), this protein is Short neurotoxin 1.